Reading from the N-terminus, the 464-residue chain is Protein FAM90A16 (464 aa).

3 disordered regions span residues 1–42, 70–389, and 415–437; these read MMAR…DPRL, PATL…HDGA, and HSPE…SEAP. Basic and acidic residues-rich tracts occupy residues 74-89 and 97-114; these read GKKE…KPRV and NKDK…DPQR. Residues 180-197 show a composition bias toward low complexity; sequence LASLSPLRKASLSSSSSL.

Belongs to the FAM90 family.

The chain is Protein FAM90A16 from Homo sapiens (Human).